A 354-amino-acid chain; its full sequence is S-adenosylmethionine:tRNA ribosyltransferase-isomerase (354 aa).

Belongs to the QueA family. As to quaternary structure, monomer.

The protein resides in the cytoplasm. It carries out the reaction 7-aminomethyl-7-carbaguanosine(34) in tRNA + S-adenosyl-L-methionine = epoxyqueuosine(34) in tRNA + adenine + L-methionine + 2 H(+). The protein operates within tRNA modification; tRNA-queuosine biosynthesis. Its function is as follows. Transfers and isomerizes the ribose moiety from AdoMet to the 7-aminomethyl group of 7-deazaguanine (preQ1-tRNA) to give epoxyqueuosine (oQ-tRNA). The sequence is that of S-adenosylmethionine:tRNA ribosyltransferase-isomerase from Klebsiella pneumoniae (strain 342).